Reading from the N-terminus, the 277-residue chain is Large ribosomal subunit protein uL2 (277 aa).

The tract at residues 219–277 is disordered; that stretch reads TVRGSVMNPNDHPHGGGEGKAPVGRKAPSTPWGKPALGLKTRNKKAKSDKLIVRRRNEK. A compositionally biased stretch (basic and acidic residues) spans 264 to 277; it reads AKSDKLIVRRRNEK.

Belongs to the universal ribosomal protein uL2 family. As to quaternary structure, part of the 50S ribosomal subunit. Forms a bridge to the 30S subunit in the 70S ribosome.

In terms of biological role, one of the primary rRNA binding proteins. Required for association of the 30S and 50S subunits to form the 70S ribosome, for tRNA binding and peptide bond formation. It has been suggested to have peptidyltransferase activity; this is somewhat controversial. Makes several contacts with the 16S rRNA in the 70S ribosome. This chain is Large ribosomal subunit protein uL2, found in Streptococcus pyogenes serotype M1.